The primary structure comprises 285 residues: GPN-loop GTPase 3 (285 aa).

A GTP-binding site is contributed by 13-18 (GSGKST). The Gly-Pro-Asn (GPN)-loop; involved in dimer interface motif lies at 72-74 (GPN). 174-177 (TKMD) contacts GTP. Positions 261 to 285 (KEPKENEEDKSENFDEFFQDRADEP) are disordered. A compositionally biased stretch (acidic residues) spans 265 to 277 (ENEEDKSENFDEF).

Belongs to the GPN-loop GTPase family. As to quaternary structure, heterodimer with gpn1. Binds to RNA polymerase II (RNAPII).

Small GTPase required for proper localization of RNA polymerase II (RNAPII). May act at an RNAP assembly step prior to nuclear import. In Xenopus tropicalis (Western clawed frog), this protein is GPN-loop GTPase 3.